A 324-amino-acid polypeptide reads, in one-letter code: Annexin A10 (324 aa).

Annexin repeat units follow at residues 17 to 88 (FNPM…GLMY), 89 to 160 (PPPS…NLVQ), 171 to 243 (AMAA…AIVR), and 247 to 318 (DKPS…AICA).

This sequence belongs to the annexin family.

The chain is Annexin A10 (Anxa10) from Mus musculus (Mouse).